A 658-amino-acid chain; its full sequence is MVTMKLFALVLLVSASVFASDDDDKKDDIGTVVGIDLGTTYSCVGVFKNGRVEIIANDQGNRITPSYVAFTPEGERLIGDAAKNQLTSNPENTVFDAKRLIGRTWNDPSVQQDIKYLPFKVIEKKTKPYIEVDIGDQMKTFAPEEISAMVLVKMKETAEAYLGRKVTHAVVTVPAYFNDAQRQATKDAGTIAGLNVMRIINEPTAAAIAYGLDKKEGEKNILVFDLGGGTFDVSLLTIDNGVFEVVATNGDTHLGGEDFDQRVMEHFIKLYKKKTGKDVRADKRAVQKLRREVEKAKRALSAQHQSRIEIESFFEGEDFSETLTRAKFEELNMDLFRSTMKPVQKVLDDSDLKKSDIDEIVLVGGSTRIPKIQQLVKELFNGKEPSRGINPDEAVAYGAAVQAGVLSGDQDTGDLVLLDVCPLTLGIETVGGVMTKLIPRNTVVPTKKSQIFSTASDNQPTVTIKVYEGERPLTKDNHLLGTFDLTGIPPAPRGVPQIEVTFEIDVNGILRVTAEDKGTGNKNKITITNDQNRLTPEEIERMVTDAEKFAEEDKKLKERIDTRNELESYAYSLKNQIGDKEKLGGKLSSEDKETIEKAVEEKIEWLESHQDADIEDFKAKKKELEEIVQPIVGKLYGGAGAPPPEGAEGAEETEKDEL.

The signal sequence occupies residues 1 to 19; the sequence is MVTMKLFALVLLVSASVFA. Residues 38 to 41, Lys98, 228 to 230, 294 to 301, and 365 to 368 each bind ATP; these read GTTY, GGT, EKAKRALS, and GSTR. Positions 127–281 are nucleotide-binding (NBD); sequence KPYIEVDIGD…KKKTGKDVRA (155 aa). The interval 410 to 420 is interdomain linker; sequence QDTGDLVLLDV. The interval 421 to 501 is substrate-binding (SBD); that stretch reads CPLTLGIETV…PRGVPQIEVT (81 aa). Residues 634–658 are disordered; sequence KLYGGAGAPPPEGAEGAEETEKDEL. The span at 648–658 shows a compositional bias: acidic residues; that stretch reads EGAEETEKDEL. The Prevents secretion from ER signature appears at 655–658; the sequence is KDEL.

Belongs to the heat shock protein 70 family. In terms of assembly, monomer and homooligomer; homooligomerization via the interdomain linker inactivates the chaperone activity and acts as a storage of hspa5/BiP molecules. Interacts with DNAJC10. Interacts with dnajb9/ERdj4; leading to recruit hspa5/BiP to ern1/ire1. Interacts with ern1/ire1; interaction takes place following interaction with dnajb9/ERdj4 and leads to inactivate ern1/IRE1.

Its subcellular location is the endoplasmic reticulum lumen. It catalyses the reaction ATP + H2O = ADP + phosphate + H(+). Its activity is regulated as follows. The chaperone activity is regulated by ATP-induced allosteric coupling of the nucleotide-binding (NBD) and substrate-binding (SBD) domains. In the ADP-bound and nucleotide-free (apo) states, the two domains have little interaction. In contrast, in the ATP-bound state the two domains are tightly coupled, which results in drastically accelerated kinetics in both binding and release of polypeptide substrates. J domain-containing co-chaperones (dnajb9/ERdj4 or dnajc10/ERdj5) stimulate the ATPase activity and are required for efficient substrate recognition by hspa5/BiP. Homooligomerization inactivates participating hspa5/BiP protomers and probably act as reservoirs to store hspa5/BiP molecules when they are not needed by the cell. Functionally, endoplasmic reticulum chaperone that plays a key role in protein folding and quality control in the endoplasmic reticulum lumen. Involved in the correct folding of proteins and degradation of misfolded proteins via its interaction with dnajc10/ERdj5, probably to facilitate the release of dnajc10/ERdj5 from its substrate. Acts as a key repressor of the EIF2AK3/PERK and ERN1/IRE1-mediated unfolded protein response (UPR). In the unstressed endoplasmic reticulum, recruited by DNAJB9/ERdj4 to the luminal region of ERN1/IRE1, leading to disrupt the dimerization of ERN1/IRE1, thereby inactivating ERN1/IRE1. Also binds and inactivates EIF2AK3/PERK in unstressed cells. Accumulation of misfolded protein in the endoplasmic reticulum causes release of HSPA5/BiP from ERN1/IRE1 and EIF2AK3/PERK, allowing their homodimerization and subsequent activation. In Xenopus laevis (African clawed frog), this protein is Endoplasmic reticulum chaperone BiP.